The sequence spans 253 residues: Uracil-DNA glycosylase (253 aa).

The Proton acceptor role is filled by Asp-79.

Belongs to the uracil-DNA glycosylase (UDG) superfamily. UNG family.

It is found in the cytoplasm. It carries out the reaction Hydrolyzes single-stranded DNA or mismatched double-stranded DNA and polynucleotides, releasing free uracil.. Functionally, excises uracil residues from the DNA which can arise as a result of misincorporation of dUMP residues by DNA polymerase or due to deamination of cytosine. In Xylella fastidiosa (strain M23), this protein is Uracil-DNA glycosylase.